Here is a 485-residue protein sequence, read N- to C-terminus: Predicted GPI-anchored protein 27 (485 aa).

Residues 1-20 (MHFTSSLLATLIWFTLPVQS) form the signal peptide. N30, N86, N96, and N444 each carry an N-linked (GlcNAc...) asparagine glycan. The GPI-anchor amidated glycine moiety is linked to residue G467. A propeptide spans 468 to 485 (LVLVSSGVLLGTCLLFIL) (removed in mature form).

The protein localises to the cell membrane. This Candida albicans (strain SC5314 / ATCC MYA-2876) (Yeast) protein is Predicted GPI-anchored protein 27 (PGA27).